Here is a 138-residue protein sequence, read N- to C-terminus: Phosphoribosyl-AMP cyclohydrolase (138 aa).

D86 serves as a coordination point for Mg(2+). Residue C87 participates in Zn(2+) binding. The Mg(2+) site is built by D88 and D90. C104 and C111 together coordinate Zn(2+).

Belongs to the PRA-CH family. Homodimer. Mg(2+) is required as a cofactor. The cofactor is Zn(2+).

It is found in the cytoplasm. The catalysed reaction is 1-(5-phospho-beta-D-ribosyl)-5'-AMP + H2O = 1-(5-phospho-beta-D-ribosyl)-5-[(5-phospho-beta-D-ribosylamino)methylideneamino]imidazole-4-carboxamide. It functions in the pathway amino-acid biosynthesis; L-histidine biosynthesis; L-histidine from 5-phospho-alpha-D-ribose 1-diphosphate: step 3/9. Its function is as follows. Catalyzes the hydrolysis of the adenine ring of phosphoribosyl-AMP. The chain is Phosphoribosyl-AMP cyclohydrolase from Marinobacter nauticus (strain ATCC 700491 / DSM 11845 / VT8) (Marinobacter aquaeolei).